The sequence spans 319 residues: Syntaxin ufe1 (319 aa).

At 1–297 (MTSRTNEFFG…IKAKSRSSRT (297 aa)) the chain is on the cytoplasmic side. The 63-residue stretch at 228–290 (LQEFEHTMER…SGGNQQLIKA (63 aa)) folds into the t-SNARE coiled-coil homology domain. The helical; Anchor for type IV membrane protein transmembrane segment at 298-315 (ARLLFCIFTVMGLLLLSL) threads the bilayer. Residues 316–319 (DRIV) are Lumenal-facing.

The protein belongs to the syntaxin family. In terms of assembly, component of a SNARE complex consisting of ufe1, use1, sec20 and sec22 or ykt6. Interacts with sad1.

The protein resides in the endoplasmic reticulum membrane. In terms of biological role, syntaxin required for targeting and fusion of Golgi-derived retrograde transport vesicles with the ER. The sequence is that of Syntaxin ufe1 (ufe1) from Schizosaccharomyces pombe (strain 972 / ATCC 24843) (Fission yeast).